The following is a 353-amino-acid chain: Photosystem II protein D1 (353 aa).

At Thr-2 the chain carries N-acetylthreonine. Thr-2 is modified (phosphothreonine). Helical transmembrane passes span 29–46 (YIGW…TATS), 118–133 (HFLL…EWEL), and 142–156 (WIAV…AAAA). His-118 provides a ligand contact to chlorophyll a. Tyr-126 is a pheophytin a binding site. Residues Asp-170 and Glu-189 each contribute to the [CaMn4O5] cluster site. Residues 197–218 (FHMLGVAGVFGGSLFSAMHGSL) form a helical membrane-spanning segment. Position 198 (His-198) interacts with chlorophyll a. A quinone contacts are provided by residues His-215 and 264 to 265 (SF). A Fe cation-binding site is contributed by His-215. A Fe cation-binding site is contributed by His-272. The helical transmembrane segment at 274 to 288 (FLAAWPVVGIWFTAL) threads the bilayer. The [CaMn4O5] cluster site is built by His-332, Glu-333, Asp-342, and Ala-344. Residues 345-353 (AVEAPSTNG) constitute a propeptide that is removed on maturation.

The protein belongs to the reaction center PufL/M/PsbA/D family. As to quaternary structure, PSII is composed of 1 copy each of membrane proteins PsbA, PsbB, PsbC, PsbD, PsbE, PsbF, PsbH, PsbI, PsbJ, PsbK, PsbL, PsbM, PsbT, PsbX, PsbY, PsbZ, Psb30/Ycf12, at least 3 peripheral proteins of the oxygen-evolving complex and a large number of cofactors. It forms dimeric complexes. It depends on The D1/D2 heterodimer binds P680, chlorophylls that are the primary electron donor of PSII, and subsequent electron acceptors. It shares a non-heme iron and each subunit binds pheophytin, quinone, additional chlorophylls, carotenoids and lipids. D1 provides most of the ligands for the Mn4-Ca-O5 cluster of the oxygen-evolving complex (OEC). There is also a Cl(-1) ion associated with D1 and D2, which is required for oxygen evolution. The PSII complex binds additional chlorophylls, carotenoids and specific lipids. as a cofactor. In terms of processing, tyr-161 forms a radical intermediate that is referred to as redox-active TyrZ, YZ or Y-Z. Post-translationally, C-terminally processed by CTPA; processing is essential to allow assembly of the oxygen-evolving complex and thus photosynthetic growth.

The protein resides in the plastid. The protein localises to the chloroplast thylakoid membrane. The enzyme catalyses 2 a plastoquinone + 4 hnu + 2 H2O = 2 a plastoquinol + O2. In terms of biological role, photosystem II (PSII) is a light-driven water:plastoquinone oxidoreductase that uses light energy to abstract electrons from H(2)O, generating O(2) and a proton gradient subsequently used for ATP formation. It consists of a core antenna complex that captures photons, and an electron transfer chain that converts photonic excitation into a charge separation. The D1/D2 (PsbA/PsbD) reaction center heterodimer binds P680, the primary electron donor of PSII as well as several subsequent electron acceptors. The sequence is that of Photosystem II protein D1 from Nandina domestica (Heavenly bamboo).